A 564-amino-acid chain; its full sequence is Membrane protein insertase YidC (564 aa).

Residues 7–24 traverse the membrane as a helical segment; sequence VLWVVFSFSLLMLWDNYN. Over residues 43–60 the composition is skewed to low complexity; sequence KPAAATDDGKTAAAPTAD. A disordered region spans residues 43–76; sequence KPAAATDDGKTAAAPTADVPTSSAHAANATGVPD. 6 helical membrane-spanning segments follow: residues 293–313, 341–361, 364–384, 438–458, 483–503, and 524–544; these read LATN…APGA, VKDY…MIQI, LLGN…LAFF, MPIV…LASV, IGSF…SMFI, and PIAF…YWVV.

This sequence belongs to the OXA1/ALB3/YidC family. Type 1 subfamily. Interacts with the Sec translocase complex via SecD. Specifically interacts with transmembrane segments of nascent integral membrane proteins during membrane integration.

Its subcellular location is the cell inner membrane. Required for the insertion and/or proper folding and/or complex formation of integral membrane proteins into the membrane. Involved in integration of membrane proteins that insert both dependently and independently of the Sec translocase complex, as well as at least some lipoproteins. Aids folding of multispanning membrane proteins. In Janthinobacterium sp. (strain Marseille) (Minibacterium massiliensis), this protein is Membrane protein insertase YidC.